The sequence spans 294 residues: MLRGSIVALITPMNEYGHVCETSLEKLINYHINNGTKAIVSVGTTGESSTLSQEEHINVVMLTLEITNKRLPIIAGTGANATSEAILLTKKFENTGISACLTVTPYYNRPTQKGLYQHFKAISENTKIPQILYNVPIRTGCDLIPETIIKLSKFKNIIGIKEATGDLSRVQKIKNSVHKNFFIISGDDTTFLDFIQLGGHGVISVTANIAAKIMSNICHLALNKNFKLARFMNNKLIPLHQGLFHEPNPIPIKWLAKKIGLIASDTLRLPMTPVSNKTRLILEKALYFSKITAK.

A pyruvate-binding site is contributed by Thr45. Tyr133 (proton donor/acceptor) is an active-site residue. The active-site Schiff-base intermediate with substrate is the Lys161. Pyruvate is bound at residue Ile203.

The protein belongs to the DapA family. Homotetramer; dimer of dimers.

It is found in the cytoplasm. The catalysed reaction is L-aspartate 4-semialdehyde + pyruvate = (2S,4S)-4-hydroxy-2,3,4,5-tetrahydrodipicolinate + H2O + H(+). It functions in the pathway amino-acid biosynthesis; L-lysine biosynthesis via DAP pathway; (S)-tetrahydrodipicolinate from L-aspartate: step 3/4. Functionally, catalyzes the condensation of (S)-aspartate-beta-semialdehyde [(S)-ASA] and pyruvate to 4-hydroxy-tetrahydrodipicolinate (HTPA). The sequence is that of 4-hydroxy-tetrahydrodipicolinate synthase from Buchnera aphidicola subsp. Baizongia pistaciae (strain Bp).